The following is a 70-amino-acid chain: UPF0434 protein MCA0634 (70 aa).

Belongs to the UPF0434 family.

The protein is UPF0434 protein MCA0634 of Methylococcus capsulatus (strain ATCC 33009 / NCIMB 11132 / Bath).